We begin with the raw amino-acid sequence, 182 residues long: Adenylate kinase (182 aa).

12-17 (GAGKGT) contacts ATP. An NMP region spans residues 32–61 (STGELLRKEIEMNTALGIQVKDIMNRGELV). Residues T33, R38, 59–61 (ELV), 85–88 (GYPR), and Q92 contribute to the AMP site. Residues 126–132 (LRGRKDD) are LID. R127 lines the ATP pocket. Residues R129 and R140 each contribute to the AMP site. An ATP-binding site is contributed by R168.

The protein belongs to the adenylate kinase family. As to quaternary structure, monomer.

It localises to the cytoplasm. It catalyses the reaction AMP + ATP = 2 ADP. The protein operates within purine metabolism; AMP biosynthesis via salvage pathway; AMP from ADP: step 1/1. Catalyzes the reversible transfer of the terminal phosphate group between ATP and AMP. Plays an important role in cellular energy homeostasis and in adenine nucleotide metabolism. In Prochlorococcus marinus (strain MIT 9301), this protein is Adenylate kinase.